A 65-amino-acid chain; its full sequence is Large ribosomal subunit protein bL31 (65 aa).

Positions 16, 18, 36, and 39 each coordinate Zn(2+).

Belongs to the bacterial ribosomal protein bL31 family. Type A subfamily. In terms of assembly, part of the 50S ribosomal subunit. It depends on Zn(2+) as a cofactor.

Its function is as follows. Binds the 23S rRNA. This Geobacter sulfurreducens (strain ATCC 51573 / DSM 12127 / PCA) protein is Large ribosomal subunit protein bL31.